The primary structure comprises 226 residues: 2-C-methyl-D-erythritol 4-phosphate cytidylyltransferase (226 aa).

The protein belongs to the IspD/TarI cytidylyltransferase family. IspD subfamily.

It carries out the reaction 2-C-methyl-D-erythritol 4-phosphate + CTP + H(+) = 4-CDP-2-C-methyl-D-erythritol + diphosphate. The protein operates within isoprenoid biosynthesis; isopentenyl diphosphate biosynthesis via DXP pathway; isopentenyl diphosphate from 1-deoxy-D-xylulose 5-phosphate: step 2/6. Catalyzes the formation of 4-diphosphocytidyl-2-C-methyl-D-erythritol from CTP and 2-C-methyl-D-erythritol 4-phosphate (MEP). The protein is 2-C-methyl-D-erythritol 4-phosphate cytidylyltransferase of Prochlorococcus marinus (strain MIT 9312).